We begin with the raw amino-acid sequence, 199 residues long: Superoxide dismutase [Mn/Fe] 2 (199 aa).

Positions 27, 81, 161, and 165 each coordinate Fe(3+). Mn(2+)-binding residues include histidine 27, histidine 81, aspartate 161, and histidine 165.

This sequence belongs to the iron/manganese superoxide dismutase family. Homodimer. Can also form a heterodimer with SodA. It depends on Mn(2+) as a cofactor. Fe(3+) is required as a cofactor.

It catalyses the reaction 2 superoxide + 2 H(+) = H2O2 + O2. Functionally, destroys superoxide anion radicals which are normally produced within the cells and which are toxic to biological systems. Catalyzes the dismutation of superoxide anion radicals into O2 and H2O2 by successive reduction and oxidation of the transition metal ion at the active site. The protein is Superoxide dismutase [Mn/Fe] 2 (sodM) of Staphylococcus aureus (strain bovine RF122 / ET3-1).